Here is a 148-residue protein sequence, read N- to C-terminus: Snaclec 27 (148 aa).

The N-terminal stretch at 1–23 (WGDSSSSASACWSCFSLVSGIGA) is a signal peptide. 3 disulfide bridges follow: Cys-27/Cys-38, Cys-55/Cys-144, and Cys-121/Cys-136. Residues 34 to 145 (HEGHCYKVFS…CSSTQQFVCK (112 aa)) enclose the C-type lectin domain.

The protein belongs to the snaclec family. In terms of assembly, heterodimer; disulfide-linked. Expressed by the venom gland.

The protein resides in the secreted. In terms of biological role, interferes with one step of hemostasis (modulation of platelet aggregation, or coagulation cascade, for example). This Echis ocellatus (Ocellated saw-scaled viper) protein is Snaclec 27.